A 329-amino-acid polypeptide reads, in one-letter code: MQGSVTEFLKPRLVDIEQVSSTHAKVTLEPLERGFGHTLGNALRRILLSSMPGCAVTEVEIDGVLHEYSTKEGVQEDILEILLNLKGLAVRVQGKDEVILTLNKSGIGPVTAADITHDGDVEIVKPQHVICHLTDENASINMRIKVQRGRGYVPASARIHSEEDERPIGRLLVDACYSPVERIAYNVEAARVEQRTDLDKLVIEMETNGTIDPEEAIRRAATILAEQLEAFVDLRDVRQPEVKEEKPEFDPILLRPVDDLELTVRSANCLKAEAIHYIGDLVQRTEVELLKTPNLGKKSLTEIKDVLASRGLSLGMRLENWPPASIADE.

An alpha N-terminal domain (alpha-NTD) region spans residues 1–235 (MQGSVTEFLK…EQLEAFVDLR (235 aa)). Residues 249-329 (FDPILLRPVD…NWPPASIADE (81 aa)) are alpha C-terminal domain (alpha-CTD).

This sequence belongs to the RNA polymerase alpha chain family. As to quaternary structure, homodimer. The RNAP catalytic core consists of 2 alpha, 1 beta, 1 beta' and 1 omega subunit. When a sigma factor is associated with the core the holoenzyme is formed, which can initiate transcription.

The catalysed reaction is RNA(n) + a ribonucleoside 5'-triphosphate = RNA(n+1) + diphosphate. In terms of biological role, DNA-dependent RNA polymerase catalyzes the transcription of DNA into RNA using the four ribonucleoside triphosphates as substrates. In Yersinia pestis bv. Antiqua (strain Antiqua), this protein is DNA-directed RNA polymerase subunit alpha.